The chain runs to 195 residues: 2-cysteine peroxiredoxin, chloroplastic (195 aa).

The Thioredoxin domain occupies I3–Y161. Catalysis depends on C49, which acts as the Cysteine sulfenic acid (-SOH) intermediate.

This sequence belongs to the peroxiredoxin family. AhpC/Prx1 subfamily. As to quaternary structure, homodimer; disulfide-linked, upon oxidation.

It is found in the plastid. The protein resides in the chloroplast. The catalysed reaction is a hydroperoxide + [thioredoxin]-dithiol = an alcohol + [thioredoxin]-disulfide + H2O. Its function is as follows. Thiol-specific peroxidase that catalyzes the reduction of hydrogen peroxide and organic hydroperoxides to water and alcohols, respectively. Plays a role in cell protection against oxidative stress by detoxifying peroxides. This is 2-cysteine peroxiredoxin, chloroplastic from Chattonella marina var. antiqua (Red tide flagellate).